A 691-amino-acid polypeptide reads, in one-letter code: MDKVLNREESMELMDLLGLERAAWGNLPLMRKAYLKKCKEFHPDKGGDEDKMKRMNTLYKKMEQDVKVAHQPDFGTWNSSEVPTYGTEEWESWWSSFNEKWDEDLFCHEDMFASDEEATADSQHSTPPKKKRKVEDPKDFPSDLHQFLSQAVFSNRTLACFAVYTTKEKAQILYKKLMEKYSVTFISRHMCAGHNIIFFLTPHRHRVSAINNFCQKLCTFSFLICKGVNKEYLLYSALTRDPYHIIEESIQGGLKEHDFNPEEPEETKQVSWKLITEYAVETKCEDVFLLLGMYLEFQYNVEECKKCQKKDQPYHFKYHEKHFANAIIFAESKNQKSICQQAVDTVLAKKRVDTLHMTREEMLTERFNHILDKMDLIFGAHGNAVLEQYMAGVAWLHCLLPKMDSVIFDFLHCVVFNVPKRRYWLFKGPIDSGKTTLAAGLLDLCGGKALNVNLPMERLTFELGVAIDQYMVVFEDVKGTGAESKDLPSGHGINNLDSLRDYLDGSVKVNLEKKHLNKRTQIFPPGLVTMNEYPVPKTLQARFVRQIDFRPKIYLRKSLQNSEFLLEKRILQSGMTLLLLLIWFRPVADFSKDIQSRIVEWKERLDSEISMYTFSRMKYNICMGKCILDITREEDSETEDSGHGSSTESQSQCSSQVSDTSAPDSENPHSQELHLCKGFQCFKRPKTPPPK.

At M1 the chain carries N-acetylmethionine; by host. The region spanning 12 to 75 (ELMDLLGLER…VKVAHQPDFG (64 aa)) is the J domain. Residues 105 to 109 (LFCHE) carry the LXCXE motif motif. S114, S122, and S125 each carry phosphoserine; by host. Residues 117-138 (EATADSQHSTPPKKKRKVEDPK) form a disordered region. Phosphothreonine; by host is present on T126. The Nuclear localization signal motif lies at 127–134 (PPKKKRKV). Residues 141–256 (PSDLHQFLSQ…EESIQGGLKE (116 aa)) constitute a DNA-binding region (T-ag OBD). Residues 267 to 359 (TKQVSWKLIT…KRVDTLHMTR (93 aa)) form a T-ag D1-type zinc finger. Zn(2+) contacts are provided by C304, C307, H315, and H319. Residues 402–562 (KMDSVIFDFL…IYLRKSLQNS (161 aa)) enclose the SF3 helicase domain. 428 to 435 (GPIDSGKT) is a binding site for ATP. The disordered stretch occupies residues 634–670 (EDSETEDSGHGSSTESQSQCSSQVSDTSAPDSENPHS). Over residues 645 to 661 (SSTESQSQCSSQVSDTS) the composition is skewed to low complexity. S661 is modified (phosphoserine; by host). At K683 the chain carries N6-acetyllysine; by host. T687 is subject to Phosphothreonine; by host.

As to quaternary structure, forms homohexamers in the presence of ATP. Interacts with host HDAC1. Interacts (via LXCXE domain) with host RB1; the interaction induces the aberrant dissociation of RB1-E2F1 complex thereby disrupting RB1's activity. Interacts (via LXCXE domain) with host pRB-related proteins RBL1 and RBL2. Interacts (via C-terminus) with host TOP1 and POLA1 allowing DNA replication. Interacts with host TP53, inhibiting TP53 binding to DNA. Interacts with host preinitiation complex components TBP, TFIIA and TFIID to regulate transcription initiation. Mg(2+) is required as a cofactor. Post-translationally, phosphorylated on both serine and threonine residues. Small t antigen inhibits the dephosphorylation by the AC form of PP2A. O-Glycosylated near the C-terminal region. In terms of processing, acetylated by CBP in a TP53-dependent manner.

It is found in the host nucleus. The catalysed reaction is Couples ATP hydrolysis with the unwinding of duplex DNA by translocating in the 3'-5' direction.. It catalyses the reaction ATP + H2O = ADP + phosphate + H(+). Isoform large T antigen is a key early protein essential for both driving viral replication and inducing cellular transformation. Plays a role in viral genome replication by driving entry of quiescent cells into the cell cycle and by autoregulating the synthesis of viral early mRNA. Displays highly oncogenic activities by corrupting the host cellular checkpoint mechanisms that guard cell division and the transcription, replication, and repair of DNA. Participates in the modulation of cellular gene expression preceeding viral DNA replication. This step involves binding to host key cell cycle regulators retinoblastoma protein RB1/pRb and TP53. Induces the disassembly of host E2F1 transcription factors from RB1, thus promoting transcriptional activation of E2F1-regulated S-phase genes. Inhibits host TP53 binding to DNA, abrogating the ability of TP53 to stimulate gene expression. Plays the role of a TFIID-associated factor (TAF) in transcription initiation for all three RNA polymerases, by stabilizing the TBP-TFIIA complex on promoters. Initiates viral DNA replication and unwinding via interactions with the viral origin of replication. Binds two adjacent sites in the SV40 origin. The replication fork movement is facilitated by Large T antigen helicase activity. Has processive 3'-5' DNA helicase activity which requires a short 3' single-stranded region and ATP. Activates the transcription of viral late mRNA, through host TBP and TFIIA stabilization. Interferes with histone deacetylation mediated by HDAC1, leading to activation of transcription. This BK polyomavirus (strain AS) (BKPyV) protein is Large T antigen.